A 165-amino-acid polypeptide reads, in one-letter code: Protein SprT (165 aa).

The region spanning 20 to 163 (EKLAQANLKL…RCVHCGEQLV (144 aa)) is the SprT-like domain. Histidine 78 provides a ligand contact to Zn(2+). Glutamate 79 is a catalytic residue. Histidine 82 is a Zn(2+) binding site.

The protein belongs to the SprT family. Zn(2+) serves as cofactor.

Its subcellular location is the cytoplasm. This Escherichia coli O127:H6 (strain E2348/69 / EPEC) protein is Protein SprT.